A 426-amino-acid chain; its full sequence is Glucose-1-phosphate adenylyltransferase (426 aa).

Alpha-D-glucose 1-phosphate contacts are provided by residues glycine 165, 180 to 181 (EK), and serine 191.

Belongs to the bacterial/plant glucose-1-phosphate adenylyltransferase family. In terms of assembly, homotetramer.

The enzyme catalyses alpha-D-glucose 1-phosphate + ATP + H(+) = ADP-alpha-D-glucose + diphosphate. Its pathway is glycan biosynthesis; glycogen biosynthesis. In terms of biological role, involved in the biosynthesis of ADP-glucose, a building block required for the elongation reactions to produce glycogen. Catalyzes the reaction between ATP and alpha-D-glucose 1-phosphate (G1P) to produce pyrophosphate and ADP-Glc. The polypeptide is Glucose-1-phosphate adenylyltransferase (Ruminiclostridium cellulolyticum (strain ATCC 35319 / DSM 5812 / JCM 6584 / H10) (Clostridium cellulolyticum)).